The sequence spans 330 residues: Agamous-like MADS-box protein AGL75 (330 aa).

One can recognise an MADS-box domain in the interval 19-61 (TSLSNRLETIFKKASELCTLCDIEACVIYYGPDGELKTWPKEK).

Interacts with MEE14/CBP1.

The protein localises to the nucleus. Functionally, probable transcription factor that may function in the maintenance of the proper function of the central cell in pollen tube attraction. The polypeptide is Agamous-like MADS-box protein AGL75 (Arabidopsis thaliana (Mouse-ear cress)).